We begin with the raw amino-acid sequence, 106 residues long: Large ribosomal subunit protein eL42 (106 aa).

Belongs to the eukaryotic ribosomal protein eL42 family.

This chain is Large ribosomal subunit protein eL42 (RPL44), found in Meyerozyma guilliermondii (strain ATCC 6260 / CBS 566 / DSM 6381 / JCM 1539 / NBRC 10279 / NRRL Y-324) (Yeast).